The following is a 444-amino-acid chain: NADH-quinone oxidoreductase subunit F (444 aa).

61–70 (GRGGAGFSTG) contacts NAD(+). 176-223 (GAGRYICGEETALINSLEGRRANPRSKPPFPAVFGLWGKPTCVNNVET) provides a ligand contact to FMN. [4Fe-4S] cluster-binding residues include C353, C356, C359, and C400.

This sequence belongs to the complex I 51 kDa subunit family. As to quaternary structure, composed of 13 different subunits. Subunits NuoCD, E, F, and G constitute the peripheral sector of the complex. Requires FMN as cofactor. The cofactor is [4Fe-4S] cluster.

It carries out the reaction a quinone + NADH + 5 H(+)(in) = a quinol + NAD(+) + 4 H(+)(out). NDH-1 shuttles electrons from NADH, via FMN and iron-sulfur (Fe-S) centers, to quinones in the respiratory chain. Couples the redox reaction to proton translocation (for every two electrons transferred, four hydrogen ions are translocated across the cytoplasmic membrane), and thus conserves the redox energy in a proton gradient. In Buchnera aphidicola subsp. Acyrthosiphon pisum (strain APS) (Acyrthosiphon pisum symbiotic bacterium), this protein is NADH-quinone oxidoreductase subunit F (nuoF).